A 326-amino-acid polypeptide reads, in one-letter code: Lipoyl synthase (326 aa).

[4Fe-4S] cluster is bound by residues C56, C61, C67, C82, C86, C89, and S298. Residues 68–287 (WEDREATFLI…KDEADAIGYS (220 aa)) form the Radical SAM core domain.

The protein belongs to the radical SAM superfamily. Lipoyl synthase family. The cofactor is [4Fe-4S] cluster.

Its subcellular location is the cytoplasm. It catalyses the reaction [[Fe-S] cluster scaffold protein carrying a second [4Fe-4S](2+) cluster] + N(6)-octanoyl-L-lysyl-[protein] + 2 oxidized [2Fe-2S]-[ferredoxin] + 2 S-adenosyl-L-methionine + 4 H(+) = [[Fe-S] cluster scaffold protein] + N(6)-[(R)-dihydrolipoyl]-L-lysyl-[protein] + 4 Fe(3+) + 2 hydrogen sulfide + 2 5'-deoxyadenosine + 2 L-methionine + 2 reduced [2Fe-2S]-[ferredoxin]. It functions in the pathway protein modification; protein lipoylation via endogenous pathway; protein N(6)-(lipoyl)lysine from octanoyl-[acyl-carrier-protein]: step 2/2. Functionally, catalyzes the radical-mediated insertion of two sulfur atoms into the C-6 and C-8 positions of the octanoyl moiety bound to the lipoyl domains of lipoate-dependent enzymes, thereby converting the octanoylated domains into lipoylated derivatives. The polypeptide is Lipoyl synthase (Streptomyces griseus subsp. griseus (strain JCM 4626 / CBS 651.72 / NBRC 13350 / KCC S-0626 / ISP 5235)).